A 64-amino-acid chain; its full sequence is Large ribosomal subunit protein bL35 (64 aa).

Residues 1 to 41 form a disordered region; the sequence is MPKMKSHSGASKRFKVSGKGKLLRQQANRRHLLEHKPSRRT.

Belongs to the bacterial ribosomal protein bL35 family.

This chain is Large ribosomal subunit protein bL35, found in Nocardia farcinica (strain IFM 10152).